The sequence spans 77 residues: Large ribosomal subunit protein bL28 (77 aa).

This sequence belongs to the bacterial ribosomal protein bL28 family.

This is Large ribosomal subunit protein bL28 from Methylibium petroleiphilum (strain ATCC BAA-1232 / LMG 22953 / PM1).